We begin with the raw amino-acid sequence, 526 residues long: Lysine--tRNA ligase (526 aa).

Residues 44–52 carry the 'HIGH' region motif; it reads PSGLPHIGT. The 'KMSKS' region signature appears at 290-294; that stretch reads KISKS. An ATP-binding site is contributed by Lys-293.

This sequence belongs to the class-I aminoacyl-tRNA synthetase family.

Its subcellular location is the cytoplasm. It catalyses the reaction tRNA(Lys) + L-lysine + ATP = L-lysyl-tRNA(Lys) + AMP + diphosphate. The chain is Lysine--tRNA ligase from Rickettsia typhi (strain ATCC VR-144 / Wilmington).